Here is a 515-residue protein sequence, read N- to C-terminus: 1-pyrroline-5-carboxylate dehydrogenase (515 aa).

Catalysis depends on residues E286 and C320.

It belongs to the aldehyde dehydrogenase family. RocA subfamily.

It carries out the reaction L-glutamate 5-semialdehyde + NAD(+) + H2O = L-glutamate + NADH + 2 H(+). Its pathway is amino-acid degradation; L-proline degradation into L-glutamate; L-glutamate from L-proline: step 2/2. The protein is 1-pyrroline-5-carboxylate dehydrogenase of Geobacillus thermodenitrificans (strain NG80-2).